The primary structure comprises 356 residues: Holliday junction branch migration complex subunit RuvB (356 aa).

Residues 13 to 201 (SSNLSRKTRL…FGITQRLNFY (189 aa)) are large ATPase domain (RuvB-L). Residues 15–35 (NLSRKTRLLDPTPSLEEGKVR) are disordered. ATP is bound by residues L40, R41, G82, K85, T86, T87, 148 to 150 (EDF), R191, Y201, and R238. T86 serves as a coordination point for Mg(2+). Residues 202–273 (SISDLNRIIQ…LVDKSLTLHQ (72 aa)) are small ATPAse domain (RuvB-S). The segment at 276–356 (ECGLDQSDRR…NSCKNSPIIK (81 aa)) is head domain (RuvB-H). Positions 331 and 336 each coordinate DNA.

The protein belongs to the RuvB family. Homohexamer. Forms an RuvA(8)-RuvB(12)-Holliday junction (HJ) complex. HJ DNA is sandwiched between 2 RuvA tetramers; dsDNA enters through RuvA and exits via RuvB. An RuvB hexamer assembles on each DNA strand where it exits the tetramer. Each RuvB hexamer is contacted by two RuvA subunits (via domain III) on 2 adjacent RuvB subunits; this complex drives branch migration. In the full resolvosome a probable DNA-RuvA(4)-RuvB(12)-RuvC(2) complex forms which resolves the HJ.

The protein resides in the cytoplasm. It catalyses the reaction ATP + H2O = ADP + phosphate + H(+). In terms of biological role, the RuvA-RuvB-RuvC complex processes Holliday junction (HJ) DNA during genetic recombination and DNA repair, while the RuvA-RuvB complex plays an important role in the rescue of blocked DNA replication forks via replication fork reversal (RFR). RuvA specifically binds to HJ cruciform DNA, conferring on it an open structure. The RuvB hexamer acts as an ATP-dependent pump, pulling dsDNA into and through the RuvAB complex. RuvB forms 2 homohexamers on either side of HJ DNA bound by 1 or 2 RuvA tetramers; 4 subunits per hexamer contact DNA at a time. Coordinated motions by a converter formed by DNA-disengaged RuvB subunits stimulates ATP hydrolysis and nucleotide exchange. Immobilization of the converter enables RuvB to convert the ATP-contained energy into a lever motion, pulling 2 nucleotides of DNA out of the RuvA tetramer per ATP hydrolyzed, thus driving DNA branch migration. The RuvB motors rotate together with the DNA substrate, which together with the progressing nucleotide cycle form the mechanistic basis for DNA recombination by continuous HJ branch migration. Branch migration allows RuvC to scan DNA until it finds its consensus sequence, where it cleaves and resolves cruciform DNA. The chain is Holliday junction branch migration complex subunit RuvB from Prochlorococcus marinus (strain SARG / CCMP1375 / SS120).